A 215-amino-acid polypeptide reads, in one-letter code: Cytochrome b6 (215 aa).

A helical membrane pass occupies residues 32 to 52 (IFYCLGGITLTCFLVQVATGF). Cys35 contributes to the heme c binding site. Heme b contacts are provided by His86 and His100. A run of 3 helical transmembrane segments spans residues 90-110 (ASMM…TGGF), 116-136 (LTWV…VTGY), and 186-206 (LHTF…FLMI). Positions 187 and 202 each coordinate heme b.

It belongs to the cytochrome b family. PetB subfamily. In terms of assembly, the 4 large subunits of the cytochrome b6-f complex are cytochrome b6, subunit IV (17 kDa polypeptide, PetD), cytochrome f and the Rieske protein, while the 4 small subunits are PetG, PetL, PetM and PetN. The complex functions as a dimer. Requires heme b as cofactor. Heme c is required as a cofactor.

The protein localises to the plastid. Its subcellular location is the chloroplast thylakoid membrane. In terms of biological role, component of the cytochrome b6-f complex, which mediates electron transfer between photosystem II (PSII) and photosystem I (PSI), cyclic electron flow around PSI, and state transitions. In Morus indica (Mulberry), this protein is Cytochrome b6.